Here is a 328-residue protein sequence, read N- to C-terminus: Malate dehydrogenase (328 aa).

G12–G18 is a binding site for NAD(+). R95 and R101 together coordinate substrate. Residues N108, Q115, and V132–N134 each bind NAD(+). Positions 134 and 165 each coordinate substrate. H190 serves as the catalytic Proton acceptor.

This sequence belongs to the LDH/MDH superfamily. MDH type 2 family.

It carries out the reaction (S)-malate + NAD(+) = oxaloacetate + NADH + H(+). Its function is as follows. Catalyzes the reversible oxidation of malate to oxaloacetate. The protein is Malate dehydrogenase of Methylibium petroleiphilum (strain ATCC BAA-1232 / LMG 22953 / PM1).